Reading from the N-terminus, the 205-residue chain is MGPIRIGVGGPVGAGKTQLVERITRALIDEVSMAAITNDIYTIEDAKILAANGVLPEERIVGIETGGCPHTAIREDTSMNDAAIKDLVERFPDLELIFVESGGDNLSATFSPELVDFSIYIIDVAQGEKIPRKAGQGMIKSDLFIINKTDLAPYVGANLDVMVEDAKTFRKNKPFCLTNLRTDDGLDKVLEWIRHEVMMQDLQEA.

10–17 (GPVGAGKT) provides a ligand contact to GTP.

This sequence belongs to the SIMIBI class G3E GTPase family. UreG subfamily. Homodimer. UreD, UreF and UreG form a complex that acts as a GTP-hydrolysis-dependent molecular chaperone, activating the urease apoprotein by helping to assemble the nickel containing metallocenter of UreC. The UreE protein probably delivers the nickel.

The protein localises to the cytoplasm. In terms of biological role, facilitates the functional incorporation of the urease nickel metallocenter. This process requires GTP hydrolysis, probably effectuated by UreG. The protein is Urease accessory protein UreG of Corynebacterium glutamicum (strain R).